The following is a 90-amino-acid chain: Probable Fe(2+)-trafficking protein (90 aa).

The protein belongs to the Fe(2+)-trafficking protein family.

Could be a mediator in iron transactions between iron acquisition and iron-requiring processes, such as synthesis and/or repair of Fe-S clusters in biosynthetic enzymes. The polypeptide is Probable Fe(2+)-trafficking protein (Leptothrix cholodnii (strain ATCC 51168 / LMG 8142 / SP-6) (Leptothrix discophora (strain SP-6))).